We begin with the raw amino-acid sequence, 511 residues long: Maturase K (511 aa).

It belongs to the intron maturase 2 family. MatK subfamily.

It localises to the plastid. The protein localises to the chloroplast. In terms of biological role, usually encoded in the trnK tRNA gene intron. Probably assists in splicing its own and other chloroplast group II introns. This is Maturase K from Trifolium burchellianum (Wild clover).